The following is a 299-amino-acid chain: ATP phosphoribosyltransferase (299 aa).

Belongs to the ATP phosphoribosyltransferase family. Long subfamily. Requires Mg(2+) as cofactor.

The protein resides in the cytoplasm. It carries out the reaction 1-(5-phospho-beta-D-ribosyl)-ATP + diphosphate = 5-phospho-alpha-D-ribose 1-diphosphate + ATP. It functions in the pathway amino-acid biosynthesis; L-histidine biosynthesis; L-histidine from 5-phospho-alpha-D-ribose 1-diphosphate: step 1/9. With respect to regulation, feedback inhibited by histidine. In terms of biological role, catalyzes the condensation of ATP and 5-phosphoribose 1-diphosphate to form N'-(5'-phosphoribosyl)-ATP (PR-ATP). Has a crucial role in the pathway because the rate of histidine biosynthesis seems to be controlled primarily by regulation of HisG enzymatic activity. This is ATP phosphoribosyltransferase from Shewanella sp. (strain ANA-3).